The following is a 207-amino-acid chain: Phosphoribosylglycinamide formyltransferase (207 aa).

13–15 serves as a coordination point for N(1)-(5-phospho-beta-D-ribosyl)glycinamide; the sequence is GSN. Residues 100 to 103 and N120 each bind (6R)-10-formyltetrahydrofolate; that span reads MHIL. The Proton donor role is filled by H122. A (6R)-10-formyltetrahydrofolate-binding site is contributed by D162. E191 is a N(1)-(5-phospho-beta-D-ribosyl)glycinamide binding site.

This sequence belongs to the GART family.

The enzyme catalyses N(1)-(5-phospho-beta-D-ribosyl)glycinamide + (6R)-10-formyltetrahydrofolate = N(2)-formyl-N(1)-(5-phospho-beta-D-ribosyl)glycinamide + (6S)-5,6,7,8-tetrahydrofolate + H(+). It functions in the pathway purine metabolism; IMP biosynthesis via de novo pathway; N(2)-formyl-N(1)-(5-phospho-D-ribosyl)glycinamide from N(1)-(5-phospho-D-ribosyl)glycinamide (10-formyl THF route): step 1/1. The chain is Phosphoribosylglycinamide formyltransferase (ade5) from Schizosaccharomyces pombe (strain 972 / ATCC 24843) (Fission yeast).